Here is a 145-residue protein sequence, read N- to C-terminus: Endosomal/vacuolar adapter protein YPT35 (145 aa).

In terms of domain architecture, PX spans 32 to 145 (ISDVLVGEHH…STVVREFVLG (114 aa)).

The protein belongs to the YPT35 family.

The protein localises to the endosome membrane. It is found in the vacuole membrane. Its function is as follows. Recruits the lipid transfer protein VPS13 to endosomal and vacuolar membranes. The chain is Endosomal/vacuolar adapter protein YPT35 (YPT35) from Meyerozyma guilliermondii (strain ATCC 6260 / CBS 566 / DSM 6381 / JCM 1539 / NBRC 10279 / NRRL Y-324) (Yeast).